A 199-amino-acid polypeptide reads, in one-letter code: V-type ATP synthase subunit E (199 aa).

It belongs to the V-ATPase E subunit family.

Its function is as follows. Produces ATP from ADP in the presence of a proton gradient across the membrane. The chain is V-type ATP synthase subunit E (atpE) from Borreliella burgdorferi (strain ATCC 35210 / DSM 4680 / CIP 102532 / B31) (Borrelia burgdorferi).